The chain runs to 193 residues: Holliday junction branch migration complex subunit RuvA (193 aa).

The tract at residues 1–64 (MIGRIQGTLV…EDAQQLFGFA (64 aa)) is domain I. The tract at residues 65-139 (TETEREAFRQ…GKLAPDLGVA (75 aa)) is domain II. A flexible linker region spans residues 139-143 (AGGKP). Positions 144–193 (QAIETSSEVLQALLALGYSEKEALLALKQIPADTSISDGIRMGLKYLSKA) are domain III.

This sequence belongs to the RuvA family. In terms of assembly, homotetramer. Forms an RuvA(8)-RuvB(12)-Holliday junction (HJ) complex. HJ DNA is sandwiched between 2 RuvA tetramers; dsDNA enters through RuvA and exits via RuvB. An RuvB hexamer assembles on each DNA strand where it exits the tetramer. Each RuvB hexamer is contacted by two RuvA subunits (via domain III) on 2 adjacent RuvB subunits; this complex drives branch migration. In the full resolvosome a probable DNA-RuvA(4)-RuvB(12)-RuvC(2) complex forms which resolves the HJ.

It localises to the cytoplasm. The RuvA-RuvB-RuvC complex processes Holliday junction (HJ) DNA during genetic recombination and DNA repair, while the RuvA-RuvB complex plays an important role in the rescue of blocked DNA replication forks via replication fork reversal (RFR). RuvA specifically binds to HJ cruciform DNA, conferring on it an open structure. The RuvB hexamer acts as an ATP-dependent pump, pulling dsDNA into and through the RuvAB complex. HJ branch migration allows RuvC to scan DNA until it finds its consensus sequence, where it cleaves and resolves the cruciform DNA. The protein is Holliday junction branch migration complex subunit RuvA of Polynucleobacter necessarius subsp. necessarius (strain STIR1).